The primary structure comprises 121 residues: Small ribosomal subunit protein bS6 (121 aa).

The disordered stretch occupies residues 94–121 (KAETGPSAVMKRVEKEEARKSSQQETAA). The segment covering 104–115 (KRVEKEEARKSS) has biased composition (basic and acidic residues).

It belongs to the bacterial ribosomal protein bS6 family.

Binds together with bS18 to 16S ribosomal RNA. In Leptothrix cholodnii (strain ATCC 51168 / LMG 8142 / SP-6) (Leptothrix discophora (strain SP-6)), this protein is Small ribosomal subunit protein bS6.